A 192-amino-acid chain; its full sequence is Xanthine phosphoribosyltransferase (192 aa).

Xanthine is bound by residues Leu-20 and Asn-27. 128–132 (AHGEA) is a binding site for 5-phospho-alpha-D-ribose 1-diphosphate. Lys-156 is a xanthine binding site.

It belongs to the purine/pyrimidine phosphoribosyltransferase family. Xpt subfamily. Homodimer.

It is found in the cytoplasm. The catalysed reaction is XMP + diphosphate = xanthine + 5-phospho-alpha-D-ribose 1-diphosphate. It functions in the pathway purine metabolism; XMP biosynthesis via salvage pathway; XMP from xanthine: step 1/1. Its function is as follows. Converts the preformed base xanthine, a product of nucleic acid breakdown, to xanthosine 5'-monophosphate (XMP), so it can be reused for RNA or DNA synthesis. This chain is Xanthine phosphoribosyltransferase, found in Lactobacillus gasseri (strain ATCC 33323 / DSM 20243 / BCRC 14619 / CIP 102991 / JCM 1131 / KCTC 3163 / NCIMB 11718 / NCTC 13722 / AM63).